A 236-amino-acid chain; its full sequence is Baculoviral IAP repeat-containing protein 8 (236 aa).

The stretch at 7–70 (WLITFGTWMY…KWYPGCKYLL (64 aa)) is one BIR repeat. Zn(2+) is bound by residues Cys39, Cys42, His59, and Cys66. The RING-type zinc-finger motif lies at 189–224 (CKICMDRHIAVVFIPCGHLVTCKQCAEAVDRCPMCN).

Belongs to the IAP family. As to quaternary structure, binds to caspase-9.

It localises to the cytoplasm. Its function is as follows. Protects against apoptosis mediated by BAX. In Gorilla gorilla gorilla (Western lowland gorilla), this protein is Baculoviral IAP repeat-containing protein 8 (BIRC8).